A 491-amino-acid polypeptide reads, in one-letter code: uncharacterized protein (491 aa).

This is an uncharacterized protein from Schizosaccharomyces pombe (strain 972 / ATCC 24843) (Fission yeast).